The sequence spans 486 residues: UDP-N-acetylglucosamine pyrophosphorylase (486 aa).

A Substrate binding motif is present at residues 109–112 (MAGG). UTP-binding positions include 109 to 112 (MAGG), Lys123, Gln199, and Gly226. Asn227 is a binding site for substrate. Asp257 is a binding site for UTP. The Substrate binding motif lies at 309–310 (EY). Lys389 is a UTP binding site. Lys421 provides a ligand contact to substrate.

This sequence belongs to the UDPGP type 1 family.

It localises to the cytoplasm. It catalyses the reaction N-acetyl-alpha-D-glucosamine 1-phosphate + UTP + H(+) = UDP-N-acetyl-alpha-D-glucosamine + diphosphate. Its pathway is nucleotide-sugar biosynthesis; UDP-N-acetyl-alpha-D-glucosamine biosynthesis; UDP-N-acetyl-alpha-D-glucosamine from N-acetyl-alpha-D-glucosamine 1-phosphate: step 1/1. The chain is UDP-N-acetylglucosamine pyrophosphorylase (UAP1) from Candida albicans (Yeast).